The primary structure comprises 119 residues: Protein TusC (119 aa).

It belongs to the DsrF/TusC family. In terms of assembly, heterohexamer, formed by a dimer of trimers. The hexameric TusBCD complex contains 2 copies each of TusB, TusC and TusD. The TusBCD complex interacts with TusE.

The protein resides in the cytoplasm. Part of a sulfur-relay system required for 2-thiolation of 5-methylaminomethyl-2-thiouridine (mnm(5)s(2)U) at tRNA wobble positions. In Sodalis glossinidius (strain morsitans), this protein is Protein TusC.